A 100-amino-acid chain; its full sequence is Large ribosomal subunit protein eL21 (100 aa).

The interval 1 to 21 is disordered; it reads MVKRTHGYRYKSRKLLRKKPR.

Belongs to the eukaryotic ribosomal protein eL21 family.

In Pyrobaculum islandicum (strain DSM 4184 / JCM 9189 / GEO3), this protein is Large ribosomal subunit protein eL21.